Consider the following 224-residue polypeptide: UPF0319 protein VC_1853 (224 aa).

The first 21 residues, 1–21 (MKLNPLILGLLLSFSAGHSLA), serve as a signal peptide directing secretion.

It belongs to the UPF0319 family.

The polypeptide is UPF0319 protein VC_1853 (Vibrio cholerae serotype O1 (strain ATCC 39315 / El Tor Inaba N16961)).